The sequence spans 68 residues: Bacteriocin lactococcin-B (68 aa).

The propeptide occupies 1–21 (MKNQLNFNIVSDEELAEVNGG).

The protein localises to the secreted. In terms of biological role, kills Lactococci by dissipating the membrane potential of the cells. The polypeptide is Bacteriocin lactococcin-B (lcnB) (Lactococcus lactis subsp. cremoris (Streptococcus cremoris)).